Here is a 297-residue protein sequence, read N- to C-terminus: Proline iminopeptidase (297 aa).

Residues 26–131 (VLLLHGGPAM…GLLVSNMMAS (106 aa)) enclose the AB hydrolase-1 domain. Serine 103 acts as the Nucleophile in catalysis. Aspartate 243 is an active-site residue. Histidine 270 (proton donor) is an active-site residue.

Belongs to the peptidase S33 family. As to quaternary structure, monomer.

It catalyses the reaction Release of N-terminal proline from a peptide.. Its function is as follows. Releases the N-terminal proline from various substrates. The chain is Proline iminopeptidase (fpaP) from Flavobacterium johnsoniae (strain ATCC 17061 / DSM 2064 / JCM 8514 / BCRC 14874 / CCUG 350202 / NBRC 14942 / NCIMB 11054 / UW101) (Cytophaga johnsonae).